Here is a 431-residue protein sequence, read N- to C-terminus: MDTVLMATTPPIRCLHASIPTVFRSPAIYQVSCRSSQLFSYRSTTMMSMCFLRRSDLRSRFLSTPKTTSPMRRPRFSVGASTEESSIPSNRNLIVANSVVIVALAVANRVLYKLALVPMKQYPFFMAQLTTFGYVLIYFTILYTRRRLGIVTNEMMDVPKWRFAIIGFLEALGVATGMAAAAMLPGPVIPILNQTYLVWQLLFALLILGRRFLLNQIAGCLLVAVGVVVAVSSGSGADTTLSGIGFLWPAVLVASAAFQAGASIIKEFVFNDAAKRLEGKSLDIFVVNSFGSGFQALFVFLLLPFLSNLKGIPFASLPSYLKDGAGCFFNTGAKISGCDGAPILPLLYISTNLAFNISLLHLVKISSAIVSSLTMMLSVPLAVYIMSKPLPYLPGGSSLSSNFTMGCIVLVLGLLLYNIPTTPTKQHTKTS.

The N-terminal 79 residues, M1–G79, are a transit peptide targeting the chloroplast. Transmembrane regions (helical) follow at residues V99 to M119, Y122 to L142, F163 to M183, V188 to L208, F212 to S232, I244 to I264, I284 to P304, I343 to V363, I365 to I385, and F403 to P423.

The protein belongs to the CRT-like transporter family.

The protein localises to the plastid. Its subcellular location is the chloroplast membrane. In terms of biological role, involved in thiol transport from the plastid to the cytosol. Transports probably both glutathione (GSH) and its precursor, gamma-glutamylcysteine (gamma-EC). This chain is Protein CLT2, chloroplastic, found in Arabidopsis thaliana (Mouse-ear cress).